The sequence spans 314 residues: Olfactory receptor 5P67 (314 aa).

Topologically, residues 1 to 28 (MAFLEDGNHTAVTEFILLGLTDDPVLRV) are extracellular. Residue Asn8 is glycosylated (N-linked (GlcNAc...) asparagine). A helical transmembrane segment spans residues 29 to 49 (ILFTIILCIYLVTVSGNLSTI). Residues 50–57 (LLIRVSSQ) lie on the Cytoplasmic side of the membrane. A helical membrane pass occupies residues 58–78 (LHHPMYFFLSHVGSVDIGYSS). At 79–102 (SVTPNMLVNFLVEKHTIAYLGCGI) the chain is on the extracellular side. Cys100 and Cys192 are joined by a disulfide. A helical transmembrane segment spans residues 103–123 (QLSSAAFFGTAECFLLATMAY). Residues 124–136 (DRFVAICNPLLYS) lie on the Cytoplasmic side of the membrane. The helical transmembrane segment at 137–157 (TKMSTQTCIQLVVGSYTGGIL) threads the bilayer. At 158–199 (NASFAIISFFSFLFCGPNRINHFYCDFAPLVELSCSDINVSV) the chain is on the extracellular side. Residues 200–220 (VITTIFSASVTIITVFVIAIS) traverse the membrane as a helical segment. The Cytoplasmic segment spans residues 221-240 (YTYILITILKMRSTEGRHKA). The helical transmembrane segment at 241–261 (FSTCTSYLTAVTLFYGTVTFI) threads the bilayer. At 262–274 (YVVPKSNYSTDQN) the chain is on the extracellular side. Residue Asn268 is glycosylated (N-linked (GlcNAc...) asparagine). A helical membrane pass occupies residues 275-295 (KVASVFYIVVIPMLNPLIYSL). The Cytoplasmic portion of the chain corresponds to 296 to 314 (RNNDIKGALKRQLGKKTFS).

It belongs to the G-protein coupled receptor 1 family.

Its subcellular location is the cell membrane. In terms of biological role, potential odorant receptor. The polypeptide is Olfactory receptor 5P67 (Mus musculus (Mouse)).